Consider the following 530-residue polypeptide: Chaperone Ric-8A (530 aa).

The residue at position 435 (Ser-435) is a Phosphoserine; by CK2. Thr-440 is modified (phosphothreonine; by CK2). Thr-442 is modified (phosphothreonine). Phosphoserine is present on residues Ser-501, Ser-522, Ser-523, and Ser-527.

Belongs to the synembryn family. As to quaternary structure, interacts with GDP-bound G alpha proteins GNAI1, GNAO1 and GNAQ, and with GNA13 with lower affinity. Does not interact with G-alpha proteins when they are in complex with subunits beta and gamma. Interacts (via C-terminus) with RGS14; the interaction stimulates the dissociation of the complex between RGS14 and the active GTP-bound form of GNAI1. Interacts with NCS1; interaction is favored in the absence of Ca(2+) and myristoylation of NCS1 is not required. Post-translationally, phosphorylated at Ser-435 and Thr-440 by CK2, stabilizing its interface with G alpha proteins.

It localises to the cytoplasm. Its subcellular location is the cell cortex. Chaperone that specifically binds and folds nascent G alpha proteins prior to G protein heterotrimer formation, promoting their stability and activity: folds GNAI1, GNAO1, GNA13 and GNAQ. Does not fold G(s) G-alpha proteins GNAS nor GNAL. Also acts as a guanine nucleotide exchange factor (GEF) for G alpha proteins by stimulating exchange of bound GDP for free GTP. Involved in regulation of microtubule pulling forces during mitotic movement of chromosomes by stimulating G(i)-alpha protein (GNAI1), possibly leading to release G(i)-alpha-GTP and NuMA proteins from the NuMA-GPSM2-G(i)-alpha-GDP complex. Also acts as an activator for G(q)-alpha (GNAQ) protein by enhancing the G(q)-coupled receptor-mediated ERK activation. This Rattus norvegicus (Rat) protein is Chaperone Ric-8A.